The following is a 349-amino-acid chain: tRNA-specific 2-thiouridylase MnmA (349 aa).

ATP is bound by residues 6 to 13 and Met-32; that span reads LLSGGVDS. Cys-103 acts as the Nucleophile in catalysis. Residues Cys-103 and Cys-195 are joined by a disulfide bond. Residue Gly-127 participates in ATP binding. An interaction with tRNA region spans residues 145–147; the sequence is KDQ. The active-site Cysteine persulfide intermediate is the Cys-195.

The protein belongs to the MnmA/TRMU family.

The protein localises to the cytoplasm. It catalyses the reaction S-sulfanyl-L-cysteinyl-[protein] + uridine(34) in tRNA + AH2 + ATP = 2-thiouridine(34) in tRNA + L-cysteinyl-[protein] + A + AMP + diphosphate + H(+). Catalyzes the 2-thiolation of uridine at the wobble position (U34) of tRNA, leading to the formation of s(2)U34. The polypeptide is tRNA-specific 2-thiouridylase MnmA (Pseudothermotoga lettingae (strain ATCC BAA-301 / DSM 14385 / NBRC 107922 / TMO) (Thermotoga lettingae)).